The chain runs to 358 residues: Photosystem II protein D1 2 (358 aa).

3 helical membrane passes run 28–45 (YVGW…AATI), 117–132 (HFLI…QWEL), and 141–155 (WICV…AAMA). Chlorophyll a is bound at residue His117. Tyr125 contributes to the pheophytin a binding site. Residues Asp169 and Glu188 each coordinate [CaMn4O5] cluster. The chain crosses the membrane as a helical span at residues 196–217 (FHMLGVAGVFGGSLFSAMHGSL). Residue His197 participates in chlorophyll a binding. A quinone is bound by residues His214 and 263–264 (SF). His214 is a Fe cation binding site. His271 is a Fe cation binding site. A helical membrane pass occupies residues 273-287 (FLGAWPVVGIWFTSM). [CaMn4O5] cluster is bound by residues His331, Glu332, Asp341, and Ala343. Positions 344-358 (AAESTPVALQAPAIG) are excised as a propeptide.

This sequence belongs to the reaction center PufL/M/PsbA/D family. PSII is composed of 1 copy each of membrane proteins PsbA, PsbB, PsbC, PsbD, PsbE, PsbF, PsbH, PsbI, PsbJ, PsbK, PsbL, PsbM, PsbT, PsbX, PsbY, PsbZ, Psb30/Ycf12, peripheral proteins PsbO, CyanoQ (PsbQ), PsbU, PsbV and a large number of cofactors. It forms dimeric complexes. It depends on The D1/D2 heterodimer binds P680, chlorophylls that are the primary electron donor of PSII, and subsequent electron acceptors. It shares a non-heme iron and each subunit binds pheophytin, quinone, additional chlorophylls, carotenoids and lipids. D1 provides most of the ligands for the Mn4-Ca-O5 cluster of the oxygen-evolving complex (OEC). There is also a Cl(-1) ion associated with D1 and D2, which is required for oxygen evolution. The PSII complex binds additional chlorophylls, carotenoids and specific lipids. as a cofactor. Post-translationally, tyr-160 forms a radical intermediate that is referred to as redox-active TyrZ, YZ or Y-Z. In terms of processing, C-terminally processed by CtpA; processing is essential to allow assembly of the oxygen-evolving complex and thus photosynthetic growth.

The protein resides in the cellular thylakoid membrane. It catalyses the reaction 2 a plastoquinone + 4 hnu + 2 H2O = 2 a plastoquinol + O2. In terms of biological role, photosystem II (PSII) is a light-driven water:plastoquinone oxidoreductase that uses light energy to abstract electrons from H(2)O, generating O(2) and a proton gradient subsequently used for ATP formation. It consists of a core antenna complex that captures photons, and an electron transfer chain that converts photonic excitation into a charge separation. The D1/D2 (PsbA/PsbD) reaction center heterodimer binds P680, the primary electron donor of PSII as well as several subsequent electron acceptors. This Synechococcus sp. (strain CC9605) protein is Photosystem II protein D1 2.